The primary structure comprises 259 residues: DNA repair protein RecO (259 aa).

Belongs to the RecO family.

In terms of biological role, involved in DNA repair and RecF pathway recombination. This is DNA repair protein RecO from Syntrophus aciditrophicus (strain SB).